The sequence spans 433 residues: tRNA-2-methylthio-N(6)-dimethylallyladenosine synthase (433 aa).

The region spanning 3-118 (KRLYIETLGC…IRDVIKQEKA (116 aa)) is the MTTase N-terminal domain. C12, C49, C81, C150, C154, and C157 together coordinate [4Fe-4S] cluster. The Radical SAM core domain maps to 136–371 (RTSPYKAFIN…LHLQMLDSIS (236 aa)). In terms of domain architecture, TRAM spans 372-433 (EQEKDKVYEV…RLSLEGELVG (62 aa)).

The protein belongs to the methylthiotransferase family. MiaB subfamily. Monomer. [4Fe-4S] cluster is required as a cofactor.

It localises to the cytoplasm. It carries out the reaction N(6)-dimethylallyladenosine(37) in tRNA + (sulfur carrier)-SH + AH2 + 2 S-adenosyl-L-methionine = 2-methylsulfanyl-N(6)-dimethylallyladenosine(37) in tRNA + (sulfur carrier)-H + 5'-deoxyadenosine + L-methionine + A + S-adenosyl-L-homocysteine + 2 H(+). In terms of biological role, catalyzes the methylthiolation of N6-(dimethylallyl)adenosine (i(6)A), leading to the formation of 2-methylthio-N6-(dimethylallyl)adenosine (ms(2)i(6)A) at position 37 in tRNAs that read codons beginning with uridine. This is tRNA-2-methylthio-N(6)-dimethylallyladenosine synthase from Nitratiruptor sp. (strain SB155-2).